The sequence spans 881 residues: Beta-mannosidase (881 aa).

The N-terminal stretch at 1–18 is a signal peptide; sequence MHLHLLFLLALCGAGCMA. Residues N35, N77, N89, and N113 are each glycosylated (N-linked (GlcNAc...) asparagine). The cysteines at positions 167 and 176 are disulfide-linked. 190–192 is a substrate binding site; it reads WDW. N-linked (GlcNAc...) asparagine glycosylation is found at N226, N297, and N302. N456 serves as a coordination point for substrate. The active-site Proton donor is E457. Disulfide bonds link C540/C629, C732/C761, and C764/C769. The active-site Nucleophile is the E554. N-linked (GlcNAc...) asparagine glycosylation is present at N803.

This sequence belongs to the glycosyl hydrolase 2 family. As to quaternary structure, monomer.

It localises to the lysosome. It carries out the reaction Hydrolysis of terminal, non-reducing beta-D-mannose residues in beta-D-mannosides.. It participates in glycan metabolism; N-glycan degradation. Its function is as follows. Exoglycosidase that cleaves the single beta-linked mannose residue from the non-reducing end of all N-linked glycoprotein oligosaccharides. This Rattus norvegicus (Rat) protein is Beta-mannosidase.